The following is a 198-amino-acid chain: Holliday junction resolvase RecU (198 aa).

The interval 1-29 (MIRYPNGKSYQPKTAASSLQKKPSYSNRG) is disordered. The span at 8–29 (KSYQPKTAASSLQKKPSYSNRG) shows a compositional bias: polar residues. T83, D85, E98, and Q117 together coordinate Mg(2+).

The protein belongs to the RecU family. It depends on Mg(2+) as a cofactor.

The protein localises to the cytoplasm. It carries out the reaction Endonucleolytic cleavage at a junction such as a reciprocal single-stranded crossover between two homologous DNA duplexes (Holliday junction).. Its function is as follows. Endonuclease that resolves Holliday junction intermediates in genetic recombination. Cleaves mobile four-strand junctions by introducing symmetrical nicks in paired strands. Promotes annealing of linear ssDNA with homologous dsDNA. Required for DNA repair, homologous recombination and chromosome segregation. The protein is Holliday junction resolvase RecU of Bacillus licheniformis (strain ATCC 14580 / DSM 13 / JCM 2505 / CCUG 7422 / NBRC 12200 / NCIMB 9375 / NCTC 10341 / NRRL NRS-1264 / Gibson 46).